The sequence spans 704 residues: Elongation factor G (704 aa).

The region spanning 8–290 (ARYRNIGISA…AVIDYLPSPV (283 aa)) is the tr-type G domain. Residues 17-24 (AHIDAGKT), 88-92 (DTPGH), and 142-145 (NKMD) contribute to the GTP site.

The protein belongs to the TRAFAC class translation factor GTPase superfamily. Classic translation factor GTPase family. EF-G/EF-2 subfamily.

It is found in the cytoplasm. In terms of biological role, catalyzes the GTP-dependent ribosomal translocation step during translation elongation. During this step, the ribosome changes from the pre-translocational (PRE) to the post-translocational (POST) state as the newly formed A-site-bound peptidyl-tRNA and P-site-bound deacylated tRNA move to the P and E sites, respectively. Catalyzes the coordinated movement of the two tRNA molecules, the mRNA and conformational changes in the ribosome. This chain is Elongation factor G, found in Salmonella agona (strain SL483).